A 251-amino-acid chain; its full sequence is Triosephosphate isomerase (251 aa).

Residues N10 and K12 each coordinate substrate. The active-site Electrophile is the H96. E168 (proton acceptor) is an active-site residue.

The protein belongs to the triosephosphate isomerase family. Homodimer.

It carries out the reaction D-glyceraldehyde 3-phosphate = dihydroxyacetone phosphate. Its pathway is carbohydrate biosynthesis; gluconeogenesis. It functions in the pathway carbohydrate degradation; glycolysis; D-glyceraldehyde 3-phosphate from glycerone phosphate: step 1/1. This chain is Triosephosphate isomerase (tpiA), found in Aspergillus oryzae (strain ATCC 42149 / RIB 40) (Yellow koji mold).